Reading from the N-terminus, the 995-residue chain is Beta-agarase A (995 aa).

The signal sequence occupies residues 1-20 (MKIKFLSAAIAASLALPLSA). The tract at residues 936–972 (GTNIGVSHSGPEAPDPGEPVDPPIDPPTPPTGGVTGG) is disordered. The segment covering 948–965 (APDPGEPVDPPIDPPTPP) has biased composition (pro residues).

This sequence belongs to the glycosyl hydrolase 50 family.

The enzyme catalyses Hydrolysis of (1-&gt;4)-beta-D-galactosidic linkages in agarose, giving the tetramer as the predominant product.. In terms of biological role, hydrolyzes agarose and also neoagarotetraose to yield neoagarobiose. The chain is Beta-agarase A (agaA) from Vibrio sp. (strain JT0107).